A 119-amino-acid chain; its full sequence is MAIITVTAQANEKNTRTVSTAKGDKKIISVPLFEKEKGSSVKVAYGSAFLPDFIQLGDTVTVSGRVQAKESGEYVNYNFVFPTVEKVFITNDNSSQSQAKQDLFGGSEPIEVNSEDLPF.

Residues Gln96–Phe119 are disordered.

Belongs to the skunalikevirus SSB protein family. As to quaternary structure, homodimer; two homodimers can further weakly assemble into a homotetramer.

Functionally, binds ssDNA with nanomolar affinity but no sequence specificity. The polypeptide is SSB protein (Lactococcus phage SK1 (Lactococcus lactis bacteriophage SK1)).